The following is a 590-amino-acid chain: DNA primase (590 aa).

The CHC2-type zinc-finger motif lies at Cys37–Cys61. One can recognise a Toprim domain in the interval Gly255–Pro337. Residues Glu261, Asp305, and Asp307 each contribute to the Mg(2+) site.

Belongs to the DnaG primase family. As to quaternary structure, monomer. Interacts with DnaB. The cofactor is Zn(2+). Requires Mg(2+) as cofactor.

The enzyme catalyses ssDNA + n NTP = ssDNA/pppN(pN)n-1 hybrid + (n-1) diphosphate.. RNA polymerase that catalyzes the synthesis of short RNA molecules used as primers for DNA polymerase during DNA replication. In Neisseria meningitidis serogroup A / serotype 4A (strain DSM 15465 / Z2491), this protein is DNA primase.